Consider the following 242-residue polypeptide: MLIDKNELEQLKVKLHSSEVIYQWDSVAYGERRSEIFRVFGAISAGIVPLWPFIFFADIQFNSKEFWGFICFSLAGMAAARYLFMPDHRYCYSLTQAGIYYTDQEVIPDAAYTFVRGFAWVGIAVCLLALAVVGPLAFVGAGGFALLAFGLTNFHPTVHKKEVYFADQLIVFDPIKEKMVDLNTDSTDEPWFDRRLFFSSLDEKTHFIELVKSIHNNVDYLPLQRVNDQYKHPIFNQELKEE.

A run of 3 helical transmembrane segments spans residues 39-59 (VFGA…FADI), 66-86 (FWGF…LFMP), and 118-138 (FAWV…PLAF).

It is found in the host membrane. In terms of biological role, immunity protein that plays a role in preventing early activation of toxin VasX. In Vibrio cholerae serotype O1 (strain ATCC 39315 / El Tor Inaba N16961), this protein is Immunity protein TsiV2.